Here is a 257-residue protein sequence, read N- to C-terminus: Protein orai-2 (257 aa).

4 helical membrane passes run 62–79 (ASSR…VAMV), 94–114 (LIAF…ALLI), 156–176 (LGIL…FLPI), and 201–221 (LVST…TIHF).

This sequence belongs to the Orai family.

The protein localises to the membrane. Its function is as follows. Ca(2+) release-activated Ca(2+)-like (CRAC-like) channel subunit which mediates Ca(2+) influx and increase in Ca(2+)-selective current by synergy with the Ca(2+) sensor, stim1. This is Protein orai-2 (orai2) from Xenopus laevis (African clawed frog).